The following is a 247-amino-acid chain: Triosephosphate isomerase (247 aa).

Residues Asn-10 and Lys-12 each contribute to the substrate site. The active-site Electrophile is the His-94. The active-site Proton acceptor is the Glu-164.

Belongs to the triosephosphate isomerase family. In terms of assembly, homodimer.

The protein resides in the cytoplasm. The catalysed reaction is D-glyceraldehyde 3-phosphate = dihydroxyacetone phosphate. It carries out the reaction dihydroxyacetone phosphate = methylglyoxal + phosphate. The protein operates within carbohydrate biosynthesis; gluconeogenesis. It functions in the pathway carbohydrate degradation; glycolysis; D-glyceraldehyde 3-phosphate from glycerone phosphate: step 1/1. Triosephosphate isomerase is an extremely efficient metabolic enzyme that catalyzes the interconversion between dihydroxyacetone phosphate (DHAP) and D-glyceraldehyde-3-phosphate (G3P) in glycolysis and gluconeogenesis. In terms of biological role, it is also responsible for the non-negligible production of methylglyoxal a reactive cytotoxic side-product that modifies and can alter proteins, DNA and lipids. This chain is Triosephosphate isomerase, found in Latimeria chalumnae (Coelacanth).